A 435-amino-acid chain; its full sequence is Tryptophan--tRNA ligase (435 aa).

ATP contacts are provided by residues 10-12 (TTS) and 18-19 (GN). A 'HIGH' region motif is present at residues 11–19 (TSGTPHLGN). Asp143 contributes to the L-tryptophan binding site. Residues 155 to 157 (GRD), Leu195, and 202 to 206 (KMSKS) each bind ATP. Positions 202 to 206 (KMSKS) match the 'KMSKS' region motif.

This sequence belongs to the class-I aminoacyl-tRNA synthetase family. In terms of assembly, homodimer.

It is found in the cytoplasm. The enzyme catalyses tRNA(Trp) + L-tryptophan + ATP = L-tryptophyl-tRNA(Trp) + AMP + diphosphate + H(+). In terms of biological role, catalyzes the attachment of tryptophan to tRNA(Trp). The polypeptide is Tryptophan--tRNA ligase (Xylella fastidiosa (strain Temecula1 / ATCC 700964)).